The chain runs to 224 residues: 7-cyano-7-deazaguanine synthase (224 aa).

10-20 is an ATP binding site; the sequence is LSGGLDSATVA. Residues C189, C199, C202, and C205 each coordinate Zn(2+).

The protein belongs to the QueC family. Requires Zn(2+) as cofactor.

The enzyme catalyses 7-carboxy-7-deazaguanine + NH4(+) + ATP = 7-cyano-7-deazaguanine + ADP + phosphate + H2O + H(+). The protein operates within purine metabolism; 7-cyano-7-deazaguanine biosynthesis. Its function is as follows. Catalyzes the ATP-dependent conversion of 7-carboxy-7-deazaguanine (CDG) to 7-cyano-7-deazaguanine (preQ(0)). This is 7-cyano-7-deazaguanine synthase from Azotobacter vinelandii (strain DJ / ATCC BAA-1303).